Reading from the N-terminus, the 226-residue chain is Urease accessory protein UreF (226 aa).

The protein belongs to the UreF family. As to quaternary structure, ureD, UreF and UreG form a complex that acts as a GTP-hydrolysis-dependent molecular chaperone, activating the urease apoprotein by helping to assemble the nickel containing metallocenter of UreC. The UreE protein probably delivers the nickel.

Its subcellular location is the cytoplasm. In terms of biological role, required for maturation of urease via the functional incorporation of the urease nickel metallocenter. The sequence is that of Urease accessory protein UreF from Nitrosospira multiformis (strain ATCC 25196 / NCIMB 11849 / C 71).